The chain runs to 153 residues: ORM1-like protein 2 (153 aa).

At 1–21 (MNVGVAHSEVNPNTRVMNSRG) the chain is on the cytoplasmic side. The next 2 membrane-spanning stretches (helical) occupy residues 22–42 (IWLA…SIPF) and 43–63 (FSIP…MYIF). Topologically, residues 64-105 (LHTVKGTPFETPDQGKARLLTHWEQMDYGLQFTSSRKFLSIS) are cytoplasmic. A helical membrane pass occupies residues 106 to 126 (PIVLYLLASFYTKYDAAHFLI). Residues 127–153 (NTASLLSVLLPKLPQFHGVRLFGINKY) lie on the Extracellular side of the membrane.

The protein belongs to the ORM family. In terms of assembly, ceramide-sensitive subunit of the serine palmitoyltransferase (SPT) complex, which is also composed of SPTLC1, SPTLC2/3 and SPTSSA/B.

It localises to the endoplasmic reticulum membrane. In terms of biological role, plays an essential role in the homeostatic regulation of sphingolipid de novo biosynthesis by modulating the activity of the serine palmitoyltransferase (SPT) in response to ceramide levels. When complexed to SPT, the binding of ceramides to its N-terminus stabilizes a conformation that block SPT substrate entry, hence preventing SPT catalytic activity. Through this mechanism, maintains ceramide levels at sufficient concentrations for the production of complex sphingolipids, but which prevents the accumulation of ceramides to levels that trigger apoptosis. The protein is ORM1-like protein 2 (Ormdl2) of Mus musculus (Mouse).